Reading from the N-terminus, the 272-residue chain is Cell division protein FtsQ (272 aa).

The Cytoplasmic segment spans residues 1-20; that stretch reads MSSYAPREIPLDIRLMQGTS. The helical transmembrane segment at 21–40 threads the bilayer; it reads RALFWLVALGCLFVAGHWLM. Over 41-272 the chain is Periplasmic; sequence QRNWWDIRAV…KTPQPAGRKD (232 aa). Residues 45 to 114 enclose the POTRA domain; that stretch reads WDIRAVRLQG…MQLAVTLQAQ (70 aa).

Belongs to the FtsQ/DivIB family. FtsQ subfamily. As to quaternary structure, part of a complex composed of FtsB, FtsL and FtsQ.

The protein localises to the cell inner membrane. Essential cell division protein. May link together the upstream cell division proteins, which are predominantly cytoplasmic, with the downstream cell division proteins, which are predominantly periplasmic. May control correct divisome assembly. This chain is Cell division protein FtsQ, found in Thiomonas arsenitoxydans (strain DSM 22701 / CIP 110005 / 3As).